Consider the following 210-residue polypeptide: Small ribosomal subunit protein uS7 (210 aa).

Acidic residues predominate over residues 1–22 (MSDEQPAEDETEEAAAESEDTQ). The disordered stretch occupies residues 1–23 (MSDEQPAEDETEEAAAESEDTQE).

It belongs to the universal ribosomal protein uS7 family. In terms of assembly, part of the 30S ribosomal subunit. Contacts proteins S9 and S11.

Functionally, one of the primary rRNA binding proteins, it binds directly to 16S rRNA where it nucleates assembly of the head domain of the 30S subunit. Is located at the subunit interface close to the decoding center. This Halobacterium salinarum (strain ATCC 29341 / DSM 671 / R1) protein is Small ribosomal subunit protein uS7.